The sequence spans 228 residues: Protein ULTRAPETALA 2 (228 aa).

In terms of domain architecture, SAND spans 14–121 (EELQEISGVH…NKALKNSNVS (108 aa)).

As to expression, expressed in influorescence, pollen and siliques, with a higher expression in influorescence.

It is found in the cytoplasm. It localises to the nucleus. Putative transcription factor that acts as a key negative regulator of cell accumulation in shoot and floral meristems. Negatively regulates the size of the WUSCHEL (WUS)-expressing organizing center in inflorescence meristems. May act by down-regulating expression of WUS. Can compensate for mutant ULT1 protein when overexpressed. The chain is Protein ULTRAPETALA 2 (ULT2) from Arabidopsis thaliana (Mouse-ear cress).